The following is a 615-amino-acid chain: Zinc metalloproteinase R519 (615 aa).

In terms of domain architecture, Peptidase M13 spans Met1–Leu611. His454 lines the Zn(2+) pocket. Glu455 is a catalytic residue. The Zn(2+) site is built by His458 and Glu513. The Proton donor role is filled by Asp517.

The protein belongs to the peptidase M13 family. Zn(2+) is required as a cofactor.

Functionally, zinc metalloprotease. This is Zinc metalloproteinase R519 from Acanthamoeba polyphaga (Amoeba).